The chain runs to 220 residues: Cobalt-precorrin-8 methylmutase (220 aa).

2 residues coordinate substrate: S15 and R38. H41 serves as the catalytic Proton donor/acceptor.

The protein belongs to the CobH/CbiC family. As to quaternary structure, homodimer.

It carries out the reaction Co-precorrin-8X = cob(II)yrinate. The protein operates within cofactor biosynthesis; adenosylcobalamin biosynthesis; cob(II)yrinate a,c-diamide from sirohydrochlorin (anaerobic route): step 9/10. Its function is as follows. Catalyzes the conversion of cobalt-precorrin-8 to cobyrinate. The chain is Cobalt-precorrin-8 methylmutase (cbiC) from Leptospira interrogans serogroup Icterohaemorrhagiae serovar Lai (strain 56601).